We begin with the raw amino-acid sequence, 305 residues long: Acyl transferase (305 aa).

Active-site charge relay system residues include Ser-116, Asp-213, and His-243.

Belongs to the LuxD family.

Its pathway is lipid metabolism; fatty acid reduction for biolumincescence. In terms of biological role, acyl transferase is part of the fatty acid reductase system required for aldehyde biosynthesis; it produces fatty acids for the luminescent reaction. This is Acyl transferase from Shewanella woodyi (strain ATCC 51908 / MS32).